A 171-amino-acid polypeptide reads, in one-letter code: Co-chaperone protein HscB homolog (171 aa).

Residues 2-74 enclose the J domain; the sequence is NHFELFGLPL…ISRAEYLLVQ (73 aa).

Belongs to the HscB family. In terms of assembly, interacts with HscA and stimulates its ATPase activity.

Co-chaperone involved in the maturation of iron-sulfur cluster-containing proteins. Seems to help targeting proteins to be folded toward HscA. The protein is Co-chaperone protein HscB homolog of Vibrio atlanticus (strain LGP32) (Vibrio splendidus (strain Mel32)).